Reading from the N-terminus, the 318-residue chain is Galactofuranose-binding protein YtfQ (318 aa).

The signal sequence occupies residues 1–21 (MWKRLLIVSAVSAAMSSMALA). Residues 34–38 (ESGWR), 111–112 (DR), Arg167, Asn220, and Asp248 each bind beta-D-galactofuranose. The cysteines at positions 150 and 214 are disulfide-linked.

Belongs to the bacterial solute-binding protein 2 family. As to quaternary structure, the complex is composed of two ATP-binding proteins (YtfR), two transmembrane proteins (YtfT and YjfF) and a solute-binding protein (YtfQ).

It localises to the periplasm. Functionally, part of the ABC transporter complex YtfQRT-YjfF involved in galactofuranose transport. Binds to both alpha- and beta-galactofuranose. The polypeptide is Galactofuranose-binding protein YtfQ (ytfQ) (Escherichia coli (strain K12)).